The chain runs to 353 residues: Photosystem II D2 protein (353 aa).

An N-acetylthreonine modification is found at Thr2. A Phosphothreonine modification is found at Thr2. Residues 41–61 (CAYFALGGWFTGTTFVTSWYT) traverse the membrane as a helical segment. His118 contributes to the chlorophyll a binding site. A helical membrane pass occupies residues 125–141 (GFMLRQFELARSVQLRP). Gln130 and Asn143 together coordinate pheophytin a. The chain crosses the membrane as a helical span at residues 153–166 (VFVSVFLIYPLGQS). Chlorophyll a is bound at residue His198. Residues 208 to 228 (AALLCAIHGATVENTLFEDGD) form a helical membrane-spanning segment. His215 and Phe262 together coordinate a plastoquinone. His215 provides a ligand contact to Fe cation. His269 provides a ligand contact to Fe cation. The chain crosses the membrane as a helical span at residues 279–295 (GLWMSALGVVGLALNLR).

This sequence belongs to the reaction center PufL/M/PsbA/D family. PSII is composed of 1 copy each of membrane proteins PsbA, PsbB, PsbC, PsbD, PsbE, PsbF, PsbH, PsbI, PsbJ, PsbK, PsbL, PsbM, PsbT, PsbX, PsbY, PsbZ, Psb30/Ycf12, at least 3 peripheral proteins of the oxygen-evolving complex and a large number of cofactors. It forms dimeric complexes. The D1/D2 heterodimer binds P680, chlorophylls that are the primary electron donor of PSII, and subsequent electron acceptors. It shares a non-heme iron and each subunit binds pheophytin, quinone, additional chlorophylls, carotenoids and lipids. There is also a Cl(-1) ion associated with D1 and D2, which is required for oxygen evolution. The PSII complex binds additional chlorophylls, carotenoids and specific lipids. serves as cofactor.

Its subcellular location is the plastid. It is found in the chloroplast thylakoid membrane. It carries out the reaction 2 a plastoquinone + 4 hnu + 2 H2O = 2 a plastoquinol + O2. In terms of biological role, photosystem II (PSII) is a light-driven water:plastoquinone oxidoreductase that uses light energy to abstract electrons from H(2)O, generating O(2) and a proton gradient subsequently used for ATP formation. It consists of a core antenna complex that captures photons, and an electron transfer chain that converts photonic excitation into a charge separation. The D1/D2 (PsbA/PsbD) reaction center heterodimer binds P680, the primary electron donor of PSII as well as several subsequent electron acceptors. D2 is needed for assembly of a stable PSII complex. This Phaseolus vulgaris (Kidney bean) protein is Photosystem II D2 protein.